A 341-amino-acid chain; its full sequence is tRNA N6-adenosine threonylcarbamoyltransferase (341 aa).

Histidine 114 and histidine 118 together coordinate Fe cation. Substrate contacts are provided by residues 136–140, aspartate 169, glycine 182, aspartate 186, and asparagine 278; that span reads LVSGG. A Fe cation-binding site is contributed by aspartate 304.

This sequence belongs to the KAE1 / TsaD family. Fe(2+) serves as cofactor.

The protein resides in the cytoplasm. It carries out the reaction L-threonylcarbamoyladenylate + adenosine(37) in tRNA = N(6)-L-threonylcarbamoyladenosine(37) in tRNA + AMP + H(+). In terms of biological role, required for the formation of a threonylcarbamoyl group on adenosine at position 37 (t(6)A37) in tRNAs that read codons beginning with adenine. Is involved in the transfer of the threonylcarbamoyl moiety of threonylcarbamoyl-AMP (TC-AMP) to the N6 group of A37, together with TsaE and TsaB. TsaD likely plays a direct catalytic role in this reaction. In Lactococcus lactis subsp. cremoris (strain SK11), this protein is tRNA N6-adenosine threonylcarbamoyltransferase.